A 418-amino-acid chain; its full sequence is Metacaspase-4 (418 aa).

Catalysis depends on residues H86 and C139. Position 139 is an S-nitrosocysteine (C139). Residues G153 to R172 are disordered.

It belongs to the peptidase C14B family. The two subunits are derived from the precursor sequence by an autocatalytic mechanism. As to expression, expressed in roots, cotyledons, leaves, cauline leaves, pollen and embryos.

The protein localises to the cytoplasm. The protein resides in the cytosol. Its activity is regulated as follows. Activated by Ca(2+) which induces self-processing and accelerates the rate of the enzyme activity, but has no effect on Km. Cysteine protease that cleaves specifically after arginine or lysine residues. Does not cleave caspase-specific substrates. Plays a positive regulatory role in biotic and abiotic stress-induced programmed cell death. This chain is Metacaspase-4 (AMC4), found in Arabidopsis thaliana (Mouse-ear cress).